The following is a 646-amino-acid chain: Protein real-time (646 aa).

One can recognise a PRELI/MSF1 domain in the interval 2-175 (VQKYESPVRI…FINELKKEGI (174 aa)). Residues 294 to 471 (TPVVVEKYFP…FLGGSCITMI (178 aa)) form the CRAL-TRIO domain. One can recognise a GOLD domain in the interval 499–646 (HHGLYKSVDL…GFSSNSLQSR (148 aa)).

It localises to the mitochondrion. The chain is Protein real-time from Aedes aegypti (Yellowfever mosquito).